The chain runs to 373 residues: Glutamate 5-kinase (373 aa).

Position 15 (Lys15) interacts with ATP. 3 residues coordinate substrate: Ser55, Asp142, and Asn154. Residues Thr174 to Asp175 and Thr216 to Lys222 contribute to the ATP site. The 79-residue stretch at Ala281–Arg359 folds into the PUA domain.

This sequence belongs to the glutamate 5-kinase family.

Its subcellular location is the cytoplasm. The catalysed reaction is L-glutamate + ATP = L-glutamyl 5-phosphate + ADP. Its pathway is amino-acid biosynthesis; L-proline biosynthesis; L-glutamate 5-semialdehyde from L-glutamate: step 1/2. Its function is as follows. Catalyzes the transfer of a phosphate group to glutamate to form L-glutamate 5-phosphate. The polypeptide is Glutamate 5-kinase (Citrifermentans bemidjiense (strain ATCC BAA-1014 / DSM 16622 / JCM 12645 / Bem) (Geobacter bemidjiensis)).